Here is a 730-residue protein sequence, read N- to C-terminus: uncharacterized protein (730 aa).

A phosphoserine mark is found at serine 82 and serine 89. Disordered regions lie at residues 82–114 (SPVR…TGSY) and 447–468 (NTNH…SKNE). Positions 89-98 (SIQPSNSGKN) are enriched in polar residues. Residues 449–460 (NHNFTTNNNNEN) are compositionally biased toward low complexity. A phosphoserine mark is found at serine 483 and serine 651.

This is an uncharacterized protein from Saccharomyces cerevisiae (strain ATCC 204508 / S288c) (Baker's yeast).